Here is a 688-residue protein sequence, read N- to C-terminus: Sciellin (688 aa).

A compositionally biased stretch (polar residues) spans 1–25 (MSNVTLRKMSPTGNEMKSTTQGTTR). The segment at 1–29 (MSNVTLRKMSPTGNEMKSTTQGTTRKQQD) is disordered. Residue Lys83 is modified to N6-acetyllysine. A disordered region spans residues 134–231 (QPGGSLNANT…TNRSAERNIR (98 aa)). Low complexity predominate over residues 140–154 (NANTSNTIASTSATT). Over residues 186–195 (VHPPIPPKPS) the composition is skewed to pro residues. A run of 16 repeats spans residues 251-266 (GEELDNLIKMNKSLNR), 267-286 (NQGLDSLFRANPKVEEREKR), 287-306 (AKSLESLIYMSTRTDKDGKG), 307-326 (IQSLGSPIKVNQRTDKNEKG), 327-346 (RQNLESVAKVNARMNKTSRR), 347-366 (SEDLDNATEVNPKGHENTTG), 367-386 (KKDLDGLIKVDPETNKNITR), 387-406 (GQSLDNLIKVTPEVKRSNQG), 407-426 (SKDLNNFIKVYPGTEKSTEG), 427-446 (GQSLDSLIKVTPERNRTNQG), 447-465 (NQDLENLIKVIPSANKSSE), 466-484 (QGLDEHINVSPKAVKNTDG), 485-504 (KQDLDKLIKVNPEIFTNNQR), 505-523 (NQDLANLIKVNPAVIRNNQ), 524-543 (SQDLDNLIKVKPSALRNTNR), and 544-563 (DQNLENLIEVNSHVSENKNG). A 16 X approximate tandem repeats region spans residues 251–563 (GEELDNLIKM…NSHVSENKNG (313 aa)). Ser289 bears the Phosphoserine mark. A disordered region spans residues 340-373 (MNKTSRRSEDLDNATEVNPKGHENTTGKKDLDGL). The segment covering 358-373 (PKGHENTTGKKDLDGL) has biased composition (basic and acidic residues). Phosphoserine is present on Ser389. Positions 619–685 (DMCTYCRKPL…EPCYSKIMAK (67 aa)) constitute an LIM zinc-binding domain.

As to expression, highly expressed in esophagus. It is also expressed in keratinocytes, amniotic tissue, foreskin stratum spinosum and stratum granulosum, hair follicle and nail.

It is found in the cytoplasm. The protein localises to the membrane. In terms of biological role, may function in the assembly or regulation of proteins in the cornified envelope. The LIM domain may be involved in homotypic or heterotypic associations and may function to localize sciellin to the cornified envelope. The protein is Sciellin (SCEL) of Homo sapiens (Human).